A 146-amino-acid chain; its full sequence is Large ribosomal subunit protein uL23m (146 aa).

A disordered region spans residues 108–146 (PDLFPEKEPTSPDPLEEELPQQRQSSDPRCPGIPSWFGL).

The protein belongs to the universal ribosomal protein uL23 family. As to quaternary structure, component of the mitochondrial ribosome large subunit (39S) which comprises a 16S rRNA and about 50 distinct proteins.

Its subcellular location is the mitochondrion. This is Large ribosomal subunit protein uL23m (Mrpl23) from Rattus norvegicus (Rat).